A 1001-amino-acid chain; its full sequence is TonB-dependent receptor P3 (1001 aa).

The signal sequence occupies residues 1 to 26 (MTTKNNKQLKSVLFMFLLLIGAYVKA). A TonB box motif is present at residues 109–116 (EEIVVIGY). Positions 120-232 (KKSDVSGSVS…ANGVIMVTTK (113 aa)) constitute a TBDR plug domain. In terms of domain architecture, TBDR beta-barrel spans 238–1001 (KPTLELNTSY…TFTMGLNMKF (764 aa)). A TonB C-terminal box motif is present at residues 984–1001 (YGSYPNVRTFTMGLNMKF).

It belongs to the TonB-dependent receptor family.

Its subcellular location is the cell outer membrane. Functionally, tonB-dependent receptor probably involved in ulvan degradation. Ulvan is the main polysaccharide component of the Ulvales (green seaweed) cell wall. It is composed of disaccharide building blocks comprising 3-sulfated rhamnose (Rha3S) linked to D-glucuronic acid (GlcA), L-iduronic acid (IduA), or D-xylose (Xyl). The TonB-dependent receptor may mediate transport of ulvan oligosaccharides from the surface of the outer membrane to the periplasm for subsequent degradation. This Formosa agariphila (strain DSM 15362 / KCTC 12365 / LMG 23005 / KMM 3901 / M-2Alg 35-1) protein is TonB-dependent receptor P3.